Consider the following 117-residue polypeptide: Large ribosomal subunit protein bL19 (117 aa).

Belongs to the bacterial ribosomal protein bL19 family.

Its function is as follows. This protein is located at the 30S-50S ribosomal subunit interface and may play a role in the structure and function of the aminoacyl-tRNA binding site. This Exiguobacterium sibiricum (strain DSM 17290 / CCUG 55495 / CIP 109462 / JCM 13490 / 255-15) protein is Large ribosomal subunit protein bL19.